The sequence spans 198 residues: MPKIGMEPLRRRELIDAAIRTIGQRGSLDVTVAQIAHEAGVSPALAHHYFGGKDKLILATMRHLLRELGRDLNAAIKQANAPHERIAAIIAVNFSAAQFAQETIAAWLTFYVHAQQSDDIKRLLRIYARRLHSNLVFALEQLTSRARANRIAEGAGAMIDGLYIRHALGADAPDAASAIALVEDYIAIQLSGQPSAEN.

Positions proline 8–leucine 68 constitute an HTH tetR-type domain. The H-T-H motif DNA-binding region spans threonine 31–phenylalanine 50.

It functions in the pathway amine and polyamine biosynthesis; betaine biosynthesis via choline pathway [regulation]. Repressor involved in the biosynthesis of the osmoprotectant glycine betaine. It represses transcription of the choline transporter BetT and the genes of BetAB involved in the synthesis of glycine betaine. The sequence is that of HTH-type transcriptional regulator BetI from Brucella suis biovar 1 (strain 1330).